A 221-amino-acid polypeptide reads, in one-letter code: Protein RER1D (221 aa).

4 helical membrane passes run 41 to 58 (IVRRWLVTLVAAVIYIYR), 64 to 84 (GYFVISYGLATYILNLLIGFL), 128 to 148 (FVVAFVMTFFSFLDVPVFWPI), and 149 to 169 (LLCYWLVLYSLTMKRLIVHMF). The interval 200–221 (KGDGGDDRPSSSNSSQGNEKQD) is disordered. Residues 209-221 (SSSNSSQGNEKQD) show a composition bias toward polar residues.

The protein belongs to the RER1 family.

The protein localises to the membrane. Involved in the retrieval of endoplasmic reticulum membrane proteins from the early Golgi compartment. This Arabidopsis thaliana (Mouse-ear cress) protein is Protein RER1D.